The primary structure comprises 353 residues: Thrombopoietin (353 aa).

A signal peptide spans 1–21 (MELTELLLVVMLLLTARLTLS). Residue Ser22 is glycosylated (O-linked (GalNAc...) serine). Cystine bridges form between Cys28–Cys172 and Cys50–Cys106. Residues Thr58, Thr131, Thr179, and Thr180 are each glycosylated (O-linked (GalNAc...) threonine). The O-linked (GalNAc...) serine glycan is linked to Ser184. 2 N-linked (GlcNAc...) (complex) asparagine glycosylation sites follow: Asn197 and Asn206. An O-linked (GalNAc...) threonine glycan is attached at Thr213. 2 N-linked (GlcNAc...) (complex) asparagine glycosylation sites follow: Asn234 and Asn255. The tract at residues 257 to 353 (TRGLFPGPSR…THSQNLSQEG (97 aa)) is disordered. Ser265 carries an O-linked (GalNAc...) serine glycan. The span at 275–304 (SSGTSDTGSLPPNLQPGYSPSPTHPPTGQY) shows a compositional bias: polar residues. Pro residues predominate over residues 324–335 (LPDPSAPTPTPT). N-linked (GlcNAc...) asparagine glycans are attached at residues Asn340 and Asn348. The span at 343 to 353 (YTHSQNLSQEG) shows a compositional bias: polar residues.

This sequence belongs to the EPO/TPO family. In terms of assembly, interacts with MPL/TPOR.

The protein resides in the secreted. Functionally, lineage-specific cytokine affecting the proliferation and maturation of megakaryocytes from their committed progenitor cells. It acts at a late stage of megakaryocyte development. It may be the major physiological regulator of circulating platelets. This is Thrombopoietin (THPO) from Homo sapiens (Human).